The chain runs to 580 residues: Glutamine--tRNA ligase (580 aa).

The 'HIGH' region signature appears at 41–51 (PEPNGYLHIGH). ATP contacts are provided by residues 42–44 (EPN) and 48–54 (HIGHAKA). L-glutamine-binding residues include aspartate 74 and tyrosine 218. ATP contacts are provided by residues threonine 237, 285–286 (RL), and 293–295 (MSK). The 'KMSKS' region motif lies at 292–296 (VMSKR).

This sequence belongs to the class-I aminoacyl-tRNA synthetase family. As to quaternary structure, monomer.

It is found in the cytoplasm. The catalysed reaction is tRNA(Gln) + L-glutamine + ATP = L-glutaminyl-tRNA(Gln) + AMP + diphosphate. This Xylella fastidiosa (strain 9a5c) protein is Glutamine--tRNA ligase.